We begin with the raw amino-acid sequence, 501 residues long: MEALLQLKGIDKAFPGVKALSGAALNVYPGRVMALVGENGAGKSTMMKVLTGIYTRDAGTLLWLGKETTFTGPKSSQEAGIGIIHQELNLIPQLTIAENIFLGREFVNRFGKIDWKTMYAEADKLLAKLNLRFKSDKLVGDLSIGDQQMVEIAKVLSFESKVIIMDEPTDALTDTETESLFRVIRELKSQGRGIVYISHRMKEIFESCDDVTVFRDGQFIAEREVASLTEDSLIEMMVGRKLEDQYPHLDKAPGDIRLKVDNLCGPGVNDVSFTLRKGEILGVSGLMGAGRTELMKVLYGALPRTSGYVTLDGHEVVTRSPQDGLANGIVYISEDRKRDGLVLGMSVKENMSLTALRYFSRAGGSLKHADEQQAVSDFIRLFNVKTPSMEQAIGLLSGGNQQKVAIARGLMTRPKVLILDEPTRGVDVGAKKEIYQLINQFKADGLSIILVSSEMPEVLGMSDRIIVMHEGHLSGEFTREQATQEVLMAAAVGKLNRVNQE.

ABC transporter domains lie at 5–241 (LQLK…VGRK) and 252–495 (APGD…VGKL). Position 37–44 (37–44 (GENGAGKS)) interacts with ATP.

Belongs to the ABC transporter superfamily. Ribose importer (TC 3.A.1.2.1) family. As to quaternary structure, the complex is composed of an ATP-binding protein (RbsA), two transmembrane proteins (RbsC) and a solute-binding protein (RbsB).

It is found in the cell inner membrane. It carries out the reaction D-ribose(out) + ATP + H2O = D-ribose(in) + ADP + phosphate + H(+). In terms of biological role, part of the ABC transporter complex RbsABC involved in ribose import. Responsible for energy coupling to the transport system. In Escherichia coli O157:H7, this protein is Ribose import ATP-binding protein RbsA 1.